Consider the following 73-residue polypeptide: UPF0435 protein OB1527 (73 aa).

It belongs to the UPF0435 family.

The chain is UPF0435 protein OB1527 from Oceanobacillus iheyensis (strain DSM 14371 / CIP 107618 / JCM 11309 / KCTC 3954 / HTE831).